The primary structure comprises 313 residues: D-alanine--D-alanine ligase (313 aa).

One can recognise an ATP-grasp domain in the interval 108-308 (KLVWQQTGVP…YSELVVKVLS (201 aa)). 138–193 (VAKLGLPLFVKPASEGSSVAVLKVKTADALPAALAEAATHDKIVIVEKSIEGGGEY) contributes to the ATP binding site. Mg(2+) is bound by residues aspartate 262, glutamate 275, and asparagine 277.

The protein belongs to the D-alanine--D-alanine ligase family. Mg(2+) is required as a cofactor. It depends on Mn(2+) as a cofactor.

Its subcellular location is the cytoplasm. The catalysed reaction is 2 D-alanine + ATP = D-alanyl-D-alanine + ADP + phosphate + H(+). It participates in cell wall biogenesis; peptidoglycan biosynthesis. Cell wall formation. The chain is D-alanine--D-alanine ligase from Burkholderia multivorans (strain ATCC 17616 / 249).